The primary structure comprises 589 residues: Peptide transporter PTR_A (589 aa).

The disordered stretch occupies residues 1–56 (MSETKPAANDLSNVPSASDSDKDNSLDKVHSLEKTGVHEDINKLPSSDLEQLEDDG). Positions 19–42 (DSDKDNSLDKVHSLEKTGVHEDIN) are enriched in basic and acidic residues. 4 consecutive transmembrane segments (helical) span residues 74-95 (IPLSCWLVAIVELAERFSYYGL), 124-144 (ALSYFWQFWCYVTPIFGAWIA), 153-173 (AICIFCGIYLVGILILFITSI), and 180-200 (NTSLGGFIVAIIIIGLGTGGV). N-linked (GlcNAc...) asparagine glycosylation is present at N233. The next 8 helical transmembrane spans lie at 236 to 256 (IQNVFMFFYLMINIGSLSVIA), 266 to 286 (FWAGYLLPLCFFCIAPLVLLL), 345 to 365 (VYACKVFVFYPIYWLVYGQMI), 388 to 408 (INAITIIIFIPICERFVYPFI), 420 to 440 (IFWGFMFASSAMVYAGVLQHF), 467 to 487 (IAIQTPAYFLIGMSEILASIT), 502 to 522 (SFIMSLFLVTNAFGSAIGIAL), and 533 to 553 (WTYTGLAVSCFIAGCLFYIIF).

Belongs to the major facilitator superfamily. Proton-dependent oligopeptide transporter (POT/PTR) (TC 2.A.17) family.

The protein resides in the cell membrane. The catalysed reaction is a dipeptide(out) + H(+)(out) = a dipeptide(in) + H(+)(in). The enzyme catalyses an L-amino acid tripeptide(out) + H(+)(out) = an L-amino acid tripeptide(in) + H(+)(in). Peptide transporter that exploits the inwardly directed proton motive force to facilitate the cellular uptake of di/tripeptides. The chain is Peptide transporter PTR_A from Candidozyma auris (Yeast).